A 316-amino-acid polypeptide reads, in one-letter code: Transaldolase 1 (316 aa).

The active-site Schiff-base intermediate with substrate is the lysine 131.

This sequence belongs to the transaldolase family. Type 1 subfamily. As to quaternary structure, homodimer.

It is found in the cytoplasm. It carries out the reaction D-sedoheptulose 7-phosphate + D-glyceraldehyde 3-phosphate = D-erythrose 4-phosphate + beta-D-fructose 6-phosphate. It functions in the pathway carbohydrate degradation; pentose phosphate pathway; D-glyceraldehyde 3-phosphate and beta-D-fructose 6-phosphate from D-ribose 5-phosphate and D-xylulose 5-phosphate (non-oxidative stage): step 2/3. In terms of biological role, transaldolase is important for the balance of metabolites in the pentose-phosphate pathway. This Pectobacterium atrosepticum (strain SCRI 1043 / ATCC BAA-672) (Erwinia carotovora subsp. atroseptica) protein is Transaldolase 1.